The primary structure comprises 801 residues: Growth-differentiation transition protein 7 (801 aa).

The N-terminal stretch at 1-22 is a signal peptide; the sequence is MIKTILIKLILLVIFCYHFLFA.

This sequence belongs to the GDT family.

The protein localises to the secreted. This chain is Growth-differentiation transition protein 7 (gdt7), found in Dictyostelium discoideum (Social amoeba).